We begin with the raw amino-acid sequence, 189 residues long: Probable nicotinate-nucleotide adenylyltransferase (189 aa).

Belongs to the NadD family.

The enzyme catalyses nicotinate beta-D-ribonucleotide + ATP + H(+) = deamido-NAD(+) + diphosphate. The protein operates within cofactor biosynthesis; NAD(+) biosynthesis; deamido-NAD(+) from nicotinate D-ribonucleotide: step 1/1. Its function is as follows. Catalyzes the reversible adenylation of nicotinate mononucleotide (NaMN) to nicotinic acid adenine dinucleotide (NaAD). This Bacillus pumilus (strain SAFR-032) protein is Probable nicotinate-nucleotide adenylyltransferase.